The primary structure comprises 341 residues: Ferrochelatase (341 aa).

Residues H196 and E277 each contribute to the Fe cation site.

It belongs to the ferrochelatase family.

The protein resides in the cytoplasm. The enzyme catalyses heme b + 2 H(+) = protoporphyrin IX + Fe(2+). It functions in the pathway porphyrin-containing compound metabolism; protoheme biosynthesis; protoheme from protoporphyrin-IX: step 1/1. Catalyzes the ferrous insertion into protoporphyrin IX. The protein is Ferrochelatase of Synechococcus sp. (strain JA-3-3Ab) (Cyanobacteria bacterium Yellowstone A-Prime).